We begin with the raw amino-acid sequence, 648 residues long: p-hydroxybenzoic acid efflux pump subunit AaeB (648 aa).

11 helical membrane passes run 11–31, 41–61, 65–87, 91–110, 125–145, 150–170, 369–389, 406–426, 430–450, 458–478, and 481–501; these read FACKLTLASVLSLLLGFYFGL, AALVAAAPAFAAGGEPFSGAI, GWLRIIGTVLGSLCALLLMMLLI, LLMILLCCLWAGVCTWLSSL, TALIIVVSCLGEPQFILQLAL, EIVLGIVCAVLVDTLLAPRSV, LFWLWSGWSAGSGCMIMIAVV, FLMGSLVALPVGALYYTLILP, QSLVLLCLSLGALTFICGMAV, MGTLASTLNILALSNPMGFPI, and FVDSAIGQMVGCLLALVVLLV.

It belongs to the aromatic acid exporter ArAE (TC 2.A.85) family.

The protein resides in the cell inner membrane. Its function is as follows. Forms an efflux pump with AaeA. Could function as a metabolic relief valve, allowing to eliminate certain compounds when they accumulate to high levels in the cell. This Edwardsiella ictaluri (strain 93-146) protein is p-hydroxybenzoic acid efflux pump subunit AaeB.